A 345-amino-acid polypeptide reads, in one-letter code: MESTLGLEIIEVVEQAAIASSKWMGKGEKNTADHVAVEAMRERMNKIHMRGRIVIGEGERDEAPMLYIGEEVGICTQVDAKQYCNPDELVEIDIAVDPCEGTNLVAYGQNGSMAVLAISEKGGLFAAPDFYMKKLAAPPAAKGHVDINKSATENLKVLSDCLNRSIEELVVVVMDRPRHKELIQEIRNAGARVRLISDGDVSAAISCAFSGTNIHALMGIGAAPEGVISAAAMRCLGGHFQGQLIYDPEVVKTGLIGESREGNLARLQEMGITNPDRVYGCEELASGETVLFAACGITPGTLMEGVRFFHGGARTQSLVISTQSKTARFVDTVHLFDRPKYIQLR.

Residues Asp-33, Glu-57, Asp-97, and Glu-100 each contribute to the Mn(2+) site. Substrate is bound by residues Glu-100 to Thr-102, Tyr-131, Arg-176 to Arg-178, and Asp-198 to Asp-200. Mn(2+) is bound at residue Glu-225.

Belongs to the FBPase class 2 family. Homotetramer. The cofactor is Mn(2+).

It carries out the reaction beta-D-fructose 1,6-bisphosphate + H2O = beta-D-fructose 6-phosphate + phosphate. The enzyme catalyses D-sedoheptulose 1,7-bisphosphate + H2O = D-sedoheptulose 7-phosphate + phosphate. It participates in carbohydrate biosynthesis; Calvin cycle. Catalyzes the hydrolysis of fructose 1,6-bisphosphate (Fru 1,6-P2) and sedoheptulose 1,7-bisphosphate (Sed 1,7-P2) to fructose 6-phosphate and sedoheptulose 7-phosphate, respectively. In Microcystis aeruginosa (strain NIES-843 / IAM M-2473), this protein is D-fructose 1,6-bisphosphatase class 2/sedoheptulose 1,7-bisphosphatase.